Consider the following 179-residue polypeptide: ATP synthase subunit delta (179 aa).

Belongs to the ATPase delta chain family. In terms of assembly, F-type ATPases have 2 components, F(1) - the catalytic core - and F(0) - the membrane proton channel. F(1) has five subunits: alpha(3), beta(3), gamma(1), delta(1), epsilon(1). F(0) has three main subunits: a(1), b(2) and c(10-14). The alpha and beta chains form an alternating ring which encloses part of the gamma chain. F(1) is attached to F(0) by a central stalk formed by the gamma and epsilon chains, while a peripheral stalk is formed by the delta and b chains.

Its subcellular location is the cell membrane. Its function is as follows. F(1)F(0) ATP synthase produces ATP from ADP in the presence of a proton or sodium gradient. F-type ATPases consist of two structural domains, F(1) containing the extramembraneous catalytic core and F(0) containing the membrane proton channel, linked together by a central stalk and a peripheral stalk. During catalysis, ATP synthesis in the catalytic domain of F(1) is coupled via a rotary mechanism of the central stalk subunits to proton translocation. Functionally, this protein is part of the stalk that links CF(0) to CF(1). It either transmits conformational changes from CF(0) to CF(1) or is implicated in proton conduction. The sequence is that of ATP synthase subunit delta from Listeria monocytogenes serotype 4b (strain CLIP80459).